Here is a 347-residue protein sequence, read N- to C-terminus: Ribosomal RNA large subunit methyltransferase M (347 aa).

S-adenosyl-L-methionine is bound by residues S184, 217–220 (APGG), D236, D256, and D272. K301 serves as the catalytic Proton acceptor.

It belongs to the class I-like SAM-binding methyltransferase superfamily. RNA methyltransferase RlmE family. RlmM subfamily. In terms of assembly, monomer.

It is found in the cytoplasm. The catalysed reaction is cytidine(2498) in 23S rRNA + S-adenosyl-L-methionine = 2'-O-methylcytidine(2498) in 23S rRNA + S-adenosyl-L-homocysteine + H(+). Its function is as follows. Catalyzes the 2'-O-methylation at nucleotide C2498 in 23S rRNA. This is Ribosomal RNA large subunit methyltransferase M from Xanthomonas euvesicatoria pv. vesicatoria (strain 85-10) (Xanthomonas campestris pv. vesicatoria).